Here is a 435-residue protein sequence, read N- to C-terminus: MRISKASLVRPGANEVYGIFALALSLFVFAYSARFGQVSILAYYGLWLPLVLVDYRKVLGNYASYLWIFAFTIFACITIFWSAAPSLSLRTGIQYLSHVVCALIAMRTIDIRTLTRGMIAGAAIVLLYSLLFGTYHYDPLDGTYSFVGAFASKNQLGFYASLGIYFAFAAVFVLGEKGLWMGAAGGAGLLAAYCLLTSQSATSVLTTAAVIGLCLGMRAITALRPASRKLLFIAASVFGGVAAVAMIYAGGVDLILGAFGKDSTLTGRTYLWQQGIEAAKVSPLVGVGYQAYWVQGFSEAERLWEEFYIGSRAGFHFHNTFIEAVVETGLIGLILLTMVLVTAFFGQLKRLLSEDRDPESMVLFGVGALLFVRAFVEIDILTPYHVGSFLLYFTAGKLTIPRRRRAATLLWPAGLDPAPYGRTFGPMIPRPGDSR.

The next 10 membrane-spanning stretches (helical) occupy residues 11 to 31 (PGAN…VFAY), 35 to 55 (FGQV…LVDY), 65 to 85 (YLWI…SAAP), 117 to 137 (GMIA…TYHY), 156 to 176 (LGFY…VLGE), 178 to 198 (GLWM…LLTS), 203 to 223 (SVLT…ITAL), 230 to 250 (LLFI…IYAG), 325 to 345 (VVET…TAFF), and 361 to 381 (MVLF…IDIL).

The protein localises to the cell membrane. Its pathway is glycan metabolism; exopolysaccharide biosynthesis. Its function is as follows. Involved in the production of exopolysaccharide. This Rhizobium meliloti (strain 1021) (Ensifer meliloti) protein is Exopolysaccharide production protein ExoQ (exoQ).